The chain runs to 737 residues: Lysyl oxidase homolog 2A (737 aa).

Positions 1-18 are cleaved as a signal peptide; the sequence is MAVSSALCIFSLLVLAQA. 4 SRCR domains span residues 29-130, 159-270, 294-393, and 403-512; these read LRLA…VICN, IRPI…VSCV, VRLR…VRCN, and IRLS…VSCS. Cystine bridges form between C55–C119, C68–C129, C99–C109, C188–C259, C201–C269, C235–C245, C319–C382, C332–C392, and C363–C373. A glycan (N-linked (GlcNAc...) asparagine) is linked at N256. N-linked (GlcNAc...) asparagine glycosylation occurs at N423. Intrachain disulfides connect C432/C498, C445/C511, and C479/C489. Positions 516-718 are lysyl-oxidase like; that stretch reads PDLVLNAQLV…WTYSCHIGGS (203 aa). The Ca(2+) site is built by D517 and L518. Intrachain disulfides connect C541–C592, C547–C662, C624–C640, and C630–C652. 3 residues coordinate Cu cation: H593, H595, and H597. N-linked (GlcNAc...) asparagine glycosylation occurs at N611. Residues 620-656 constitute a cross-link (lysine tyrosylquinone (Lys-Tyr)); that stretch reads KASFCLEDTHCDEGISKRYHCANFGEQGITVGCWDTY. Y656 bears the 2',4',5'-topaquinone mark. Ca(2+) contacts are provided by E689, D691, N694, and N695. C699 and C713 form a disulfide bridge.

The protein belongs to the lysyl oxidase family. It depends on Cu cation as a cofactor. The cofactor is lysine tyrosylquinone residue. The lysine tyrosylquinone cross-link (LTQ) is generated by condensation of the epsilon-amino group of a lysine with a topaquinone produced by oxidation of tyrosine.

Its subcellular location is the secreted. It is found in the extracellular space. The protein localises to the extracellular matrix. It localises to the basement membrane. The protein resides in the nucleus. Its subcellular location is the chromosome. It is found in the endoplasmic reticulum. It carries out the reaction L-lysyl-[protein] + O2 + H2O = (S)-2-amino-6-oxohexanoyl-[protein] + H2O2 + NH4(+). Mediates the post-translational oxidative deamination of lysine residues on target proteins leading to the formation of deaminated lysine (allysine). Acts as a transcription corepressor and specifically mediates deamination of trimethylated 'Lys-4' of histone H3 (H3K4me3), a specific tag for epigenetic transcriptional activation. Shows no activity against histone H3 when it is trimethylated on 'Lys-9' (H3K9me3) or 'Lys-27' (H3K27me3) or when 'Lys-4' is monomethylated (H3K4me1) or dimethylated (H3K4me2). Also mediates deamination of methylated TAF10, a member of the transcription factor IID (TFIID) complex, which induces release of TAF10 from promoters, leading to inhibition of TFIID-dependent transcription. LOXL2-mediated deamination of TAF10 results in transcriptional repression of genes required for embryonic stem cell pluripotency. Involved in epithelial to mesenchymal transition (EMT) and participates in repression of E-cadherin, probably by mediating deamination of histone H3. When secreted into the extracellular matrix, promotes cross-linking of extracellular matrix proteins by mediating oxidative deamination of peptidyl lysine residues in precursors to fibrous collagen and elastin. Acts as a regulator of sprouting angiogenesis, probably via collagen IV scaffolding. Acts as a regulator of chondrocyte differentiation, probably by regulating expression of factors that control chondrocyte differentiation. Required with loxl2b for correct expression of Sox2 and for neural differentiation. In Danio rerio (Zebrafish), this protein is Lysyl oxidase homolog 2A (loxl2a).